The following is a 559-amino-acid chain: NXPE family member 3 (559 aa).

Residues 1–30 (MWINFVKLRLFCCLLAVLMVVVLVVNVTQV) form the signal peptide. N26, N237, and N346 each carry an N-linked (GlcNAc...) asparagine glycan.

It belongs to the NXPE family.

The protein localises to the secreted. This Bos taurus (Bovine) protein is NXPE family member 3 (NXPE3).